Consider the following 216-residue polypeptide: Somatotropin (216 aa).

A signal peptide spans 1 to 26 (MAAGPRTSALLAFALLCLPWTREVGA). Residue H45 coordinates Zn(2+). An intrachain disulfide couples C78 to C189. At S131 the chain carries Phosphoserine. E198 is a binding site for Zn(2+). An intrachain disulfide couples C206 to C214.

It belongs to the somatotropin/prolactin family.

Its subcellular location is the secreted. Functionally, plays an important role in growth control. Its major role in stimulating body growth is to stimulate the liver and other tissues to secrete IGF1. It stimulates both the differentiation and proliferation of myoblasts. It also stimulates amino acid uptake and protein synthesis in muscle and other tissues. The polypeptide is Somatotropin (GH1) (Sus scrofa (Pig)).